We begin with the raw amino-acid sequence, 335 residues long: Ketol-acid reductoisomerase (NAD(P)(+)) (335 aa).

The 181-residue stretch at 5–185 (AKIYTDKDTT…GGTRAGAIET (181 aa)) folds into the KARI N-terminal Rossmann domain. Residues 28–31 (YGSQ), Arg-52, Ser-56, and 86–89 (DMAQ) contribute to the NADP(+) site. Residue His-111 is part of the active site. An NADP(+)-binding site is contributed by Gly-137. The 146-residue stretch at 186–331 (TFKEETETDL…RRLKEIIERG (146 aa)) folds into the KARI C-terminal knotted domain. Positions 194, 198, 230, and 234 each coordinate Mg(2+). Ser-255 serves as a coordination point for substrate. Positions 301 to 335 (GSPTLSKGLEEMDKSLEEQTGRRLKEIIERGRPKS) are disordered. The span at 308 to 335 (GLEEMDKSLEEQTGRRLKEIIERGRPKS) shows a compositional bias: basic and acidic residues.

The protein belongs to the ketol-acid reductoisomerase family. It depends on Mg(2+) as a cofactor.

The catalysed reaction is (2R)-2,3-dihydroxy-3-methylbutanoate + NAD(+) = (2S)-2-acetolactate + NADH + H(+). It catalyses the reaction (2R)-2,3-dihydroxy-3-methylbutanoate + NADP(+) = (2S)-2-acetolactate + NADPH + H(+). Its pathway is amino-acid biosynthesis; L-isoleucine biosynthesis; L-isoleucine from 2-oxobutanoate: step 2/4. It functions in the pathway amino-acid biosynthesis; L-valine biosynthesis; L-valine from pyruvate: step 2/4. In terms of biological role, involved in the biosynthesis of branched-chain amino acids (BCAA). Catalyzes an alkyl-migration followed by a ketol-acid reduction of (S)-2-acetolactate (S2AL) to yield (R)-2,3-dihydroxy-isovalerate. In the isomerase reaction, S2AL is rearranged via a Mg-dependent methyl migration to produce 3-hydroxy-3-methyl-2-ketobutyrate (HMKB). In the reductase reaction, this 2-ketoacid undergoes a metal-dependent reduction by NADPH or NADH to yield (R)-2,3-dihydroxy-isovalerate. In Metallosphaera sedula (strain ATCC 51363 / DSM 5348 / JCM 9185 / NBRC 15509 / TH2), this protein is Ketol-acid reductoisomerase (NAD(P)(+)).